Reading from the N-terminus, the 525-residue chain is Probable malate:quinone oxidoreductase (525 aa).

It belongs to the MQO family. It depends on FAD as a cofactor.

The catalysed reaction is (S)-malate + a quinone = a quinol + oxaloacetate. Its pathway is carbohydrate metabolism; tricarboxylic acid cycle; oxaloacetate from (S)-malate (quinone route): step 1/1. This chain is Probable malate:quinone oxidoreductase, found in Serratia proteamaculans (strain 568).